The primary structure comprises 517 residues: Nucleoside transporter FUN26 (517 aa).

The segment at 1-63 (MSTSADTDTI…EREQSVSTEP (63 aa)) is disordered. Positions 25-44 (THSEEISRSGEEHESENNEH) are enriched in basic and acidic residues. Phosphoserine occurs at positions 45 and 58. A run of 11 helical transmembrane segments spans residues 76–96 (LSYI…NCIL), 116–136 (IFTS…NIYL), 151–171 (LVWE…HFLL), 174–194 (WFNF…TAMT), 214–234 (MVGQ…LAFI), 243–263 (GGIL…VVMF), 344–364 (LVLS…FASA), 367–387 (VTGL…LWNL), 411–431 (TFIY…FTAI), 446–466 (IVDL…GHVI), and 492–512 (IFVS…VFII).

The protein belongs to the SLC29A/ENT transporter (TC 2.A.57) family.

Its subcellular location is the membrane. Has broad nucleoside selectivity (uridine, adenosine and cytidine) and most likely functions to transport nucleosides across intracellular membranes. This chain is Nucleoside transporter FUN26 (FUN26), found in Saccharomyces cerevisiae (strain ATCC 204508 / S288c) (Baker's yeast).